Consider the following 247-residue polypeptide: Carboxy-S-adenosyl-L-methionine synthase (247 aa).

Residues Tyr-40, 65–67 (GAS), 90–91 (DN), 122–123 (DI), Asn-137, and Arg-204 contribute to the S-adenosyl-L-methionine site.

It belongs to the class I-like SAM-binding methyltransferase superfamily. Cx-SAM synthase family. As to quaternary structure, homodimer.

The enzyme catalyses prephenate + S-adenosyl-L-methionine = carboxy-S-adenosyl-L-methionine + 3-phenylpyruvate + H2O. Functionally, catalyzes the conversion of S-adenosyl-L-methionine (SAM) to carboxy-S-adenosyl-L-methionine (Cx-SAM). The sequence is that of Carboxy-S-adenosyl-L-methionine synthase from Pseudomonas putida (strain ATCC 47054 / DSM 6125 / CFBP 8728 / NCIMB 11950 / KT2440).